Here is a 415-residue protein sequence, read N- to C-terminus: Squalene synthase 1 (415 aa).

The next 2 helical transmembrane spans lie at 281–301 (AIFR…ALCF) and 391–411 (LIAI…SNLL).

It belongs to the phytoene/squalene synthase family. It depends on Mg(2+) as a cofactor. Requires Mn(2+) as cofactor. As to expression, mostly expressed in the shoot apex (buds) and roots, and, to a lower extent, in stems, leaves, flowers and seeds.

It is found in the endoplasmic reticulum membrane. It carries out the reaction 2 (2E,6E)-farnesyl diphosphate + NADH + H(+) = squalene + 2 diphosphate + NAD(+). The enzyme catalyses 2 (2E,6E)-farnesyl diphosphate + NADPH + H(+) = squalene + 2 diphosphate + NADP(+). It functions in the pathway terpene metabolism; lanosterol biosynthesis; lanosterol from farnesyl diphosphate: step 1/3. Functionally, component of the triterpene saponins (e.g. ginsenosides or panaxosides) and phytosterols biosynthetic pathways. Catalyzes the biosynthesis of squalene. This Panax ginseng (Korean ginseng) protein is Squalene synthase 1.